A 610-amino-acid chain; its full sequence is Solute carrier family 2, facilitated glucose transporter member 12 (610 aa).

The Cytoplasmic segment spans residues 1-49 (MDAPEESIRMTSDPQSKIYVQNPDTHIHLEQGPSAKSGNGRALVLCSVS). Residues 50-70 (VACLSGLLMGYEMSLISGALL) form a helical membrane-spanning segment. The Extracellular portion of the chain corresponds to 71-84 (QLRDVLTLSCPEQE). The chain crosses the membrane as a helical span at residues 85 to 105 (QVVGSLLLGAFLLSLGGGTIL). The Cytoplasmic segment spans residues 106–118 (DHYGRRFTIILTA). Residues 119–139 (LLCVLGTLLSVCVVSFWALVV) traverse the membrane as a helical segment. Over 140–141 (GR) the chain is Extracellular. Residues 142-162 (MLVGMSVALSGTASCLYAAEV) traverse the membrane as a helical segment. The Cytoplasmic segment spans residues 163–176 (APAAWRGRCVCVYE). Residues 177–197 (LMVVLGMLLGFGLSWAFAGVP) form a helical membrane-spanning segment. Topologically, residues 198–201 (DGWR) are extracellular. The helical transmembrane segment at 202 to 222 (FTFGGALLPALLQAGVMPLLP) threads the bilayer. At 223 to 286 (DSPRFLLAQQ…FQSRDNMLQR (64 aa)) the chain is on the cytoplasmic side. The helical transmembrane segment at 287–307 (LLVGAALVFLQQATGQPNILA) threads the bilayer. At 308–325 (YASTVLSSVGFHGNEAAT) the chain is on the extracellular side. Residues 326 to 346 (LASTGFGVVKVGGTIPAIFLV) traverse the membrane as a helical segment. Over 347–353 (DKVGPKA) the chain is Cytoplasmic. The helical transmembrane segment at 354-374 (LLCVGVVVMMLSTATLGAITM) threads the bilayer. At 375-475 (QSRTHVSSLC…LHEVSPSLKW (101 aa)) the chain is on the extracellular side. Residues Asn-392, Asn-429, and Asn-438 are each glycosylated (N-linked (GlcNAc...) asparagine). A helical transmembrane segment spans residues 476-496 (ISLVSLLVYVAGFSISLGPMV). Residues 497 to 511 (HVVLSAIFPTGIRGK) lie on the Cytoplasmic side of the membrane. The helical transmembrane segment at 512–532 (AVSVISAFNWATNLLISMTFL) threads the bilayer. Residues 533–542 (TLTERIGLPT) lie on the Extracellular side of the membrane. The helical transmembrane segment at 543-563 (VIFSYSAMSFLLVVFVIVFVP) threads the bilayer. Residues 564–610 (ETKGRSLEQISKELAMKNHLRGTLLCHRRKHKATAQPSQEEKALATV) lie on the Cytoplasmic side of the membrane.

The protein belongs to the major facilitator superfamily. Sugar transporter (TC 2.A.1.1) family. Glucose transporter subfamily. Expressed in the main insulin-sensitive tissues, such as cardiac muscle, skeletal muscle and adipose tissue.

The protein resides in the cell membrane. Its subcellular location is the endomembrane system. It is found in the cytoplasm. The protein localises to the perinuclear region. The catalysed reaction is D-glucose(out) = D-glucose(in). Its function is as follows. Insulin-regulated facilitative glucose transporter. This Danio rerio (Zebrafish) protein is Solute carrier family 2, facilitated glucose transporter member 12.